The sequence spans 272 residues: MGQRRQTKSQHAKPRTFRTSPVMFEKEIFFDSDEIIDAVGQSKFVLKNLHHYTVHPNLAQYYEPLKPTALQKFLARNRKIQSFTLKVIEYDQDKTLLILTNNPLPCPIDHQGKDVTPKYFSNELLLKESHQHKPTENFFLPLMPQKKNLRSGLKPVFPLMLLEDTKSKREQWFRFSTDNDFKSEGKYSKVYTLRQQKKMYPQLTFASVCKKYMKNDVSKKSGSDSPTSQMIWEPLTLSSLLEKKPTRTAPGESEFRNGRAQQWFIKSATVIK.

In Bos taurus (Bovine), this protein is Testis-specific gene 13 protein (TSGA13).